Reading from the N-terminus, the 420-residue chain is ATP phosphoribosyltransferase regulatory subunit (420 aa).

The protein belongs to the class-II aminoacyl-tRNA synthetase family. HisZ subfamily. Heteromultimer composed of HisG and HisZ subunits.

The protein resides in the cytoplasm. It functions in the pathway amino-acid biosynthesis; L-histidine biosynthesis; L-histidine from 5-phospho-alpha-D-ribose 1-diphosphate: step 1/9. Functionally, required for the first step of histidine biosynthesis. May allow the feedback regulation of ATP phosphoribosyltransferase activity by histidine. The protein is ATP phosphoribosyltransferase regulatory subunit of Bacillus thuringiensis (strain Al Hakam).